The sequence spans 335 residues: 2,4-dienoyl-CoA reductase [(3E)-enoyl-CoA-producing], mitochondrial (335 aa).

The transit peptide at 1 to 34 directs the protein to the mitochondrion; that stretch reads MKLPARVFFTLGSRLPCGLAPRRFFSYGTKILYQ. 2 positions are modified to N6-acetyllysine; alternate: Lys42 and Lys49. N6-succinyllysine; alternate is present on residues Lys42 and Lys49. An NADP(+)-binding site is contributed by 66–71; the sequence is GGGTGL. At Thr69 the chain carries Phosphothreonine. N6-succinyllysine is present on Lys73. NADP(+) is bound at residue Arg91. Position 91 (Arg91) interacts with substrate. Residue Lys97 is modified to N6-acetyllysine; alternate. Lys97 bears the N6-succinyllysine; alternate mark. NADP(+) is bound at residue Asp117. Substrate contacts are provided by Arg119, Phe149, and Ser157. Tyr199 (proton acceptor) is an active-site residue. Lys214 provides a ligand contact to NADP(+). Lys230 is subject to N6-acetyllysine. Residue 240–243 coordinates NADP(+); that stretch reads PGPI. An N6-acetyllysine; alternate modification is found at Lys244. Lys244 bears the N6-succinyllysine; alternate mark. Substrate is bound at residue Arg251. An N6-acetyllysine; alternate mark is found at Lys260 and Lys319. An N6-succinyllysine; alternate mark is found at Lys260 and Lys319.

The protein belongs to the short-chain dehydrogenases/reductases (SDR) family. 2,4-dienoyl-CoA reductase subfamily. Homotetramer. In terms of tissue distribution, heart = liver = pancreas &gt; kidney &gt;&gt; skeletal muscle = lung.

The protein localises to the mitochondrion. The enzyme catalyses a (2E,4E)-dienoyl-CoA + NADPH + H(+) = a 4,5-saturated-(3E)-enoyl-CoA + NADP(+). The catalysed reaction is a (2E,4Z)-dienoyl-CoA + NADPH + H(+) = a 4,5-saturated-(3E)-enoyl-CoA + NADP(+). It catalyses the reaction (2E,4E)-hexadienoyl-CoA + NADPH + H(+) = (3E)-hexenoyl-CoA + NADP(+). Functionally, auxiliary enzyme of beta-oxidation. It participates in the metabolism of unsaturated fatty enoyl-CoA esters having double bonds in both even- and odd-numbered positions in mitochondria. Catalyzes the NADP-dependent reduction of 2,4-dienoyl-CoA to yield trans-3-enoyl-CoA. This Homo sapiens (Human) protein is 2,4-dienoyl-CoA reductase [(3E)-enoyl-CoA-producing], mitochondrial (DECR1).